A 99-amino-acid chain; its full sequence is Beta-2-microglobulin (99 aa).

One can recognise an Ig-like C1-type domain in the interval 5-93; that stretch reads PRVQVYSRHP…HITLSEPKIV (89 aa). A disulfide bridge links C25 with C80.

The protein belongs to the beta-2-microglobulin family. Heterodimer of an alpha chain and a beta chain. Beta-2-microglobulin is the beta-chain of major histocompatibility complex class I molecules.

The protein resides in the secreted. In terms of biological role, component of the class I major histocompatibility complex (MHC). Involved in the presentation of peptide antigens to the immune system. The protein is Beta-2-microglobulin (B2M) of Cavia porcellus (Guinea pig).